The following is a 495-amino-acid chain: Maturase K (495 aa).

Belongs to the intron maturase 2 family. MatK subfamily.

It localises to the plastid. The protein localises to the chloroplast. Its function is as follows. Usually encoded in the trnK tRNA gene intron. Probably assists in splicing its own and other chloroplast group II introns. This chain is Maturase K, found in Torreya californica (California nutmeg).